Consider the following 101-residue polypeptide: ATP-dependent Clp protease adapter protein ClpS (101 aa).

The protein belongs to the ClpS family. In terms of assembly, binds to the N-terminal domain of the chaperone ClpA.

Its function is as follows. Involved in the modulation of the specificity of the ClpAP-mediated ATP-dependent protein degradation. The polypeptide is ATP-dependent Clp protease adapter protein ClpS (Treponema denticola (strain ATCC 35405 / DSM 14222 / CIP 103919 / JCM 8153 / KCTC 15104)).